The chain runs to 201 residues: dTTP/UTP pyrophosphatase (201 aa).

Asp-75 functions as the Proton acceptor in the catalytic mechanism.

It belongs to the Maf family. YhdE subfamily. The cofactor is a divalent metal cation.

It localises to the cytoplasm. The enzyme catalyses dTTP + H2O = dTMP + diphosphate + H(+). The catalysed reaction is UTP + H2O = UMP + diphosphate + H(+). In terms of biological role, nucleoside triphosphate pyrophosphatase that hydrolyzes dTTP and UTP. May have a dual role in cell division arrest and in preventing the incorporation of modified nucleotides into cellular nucleic acids. The chain is dTTP/UTP pyrophosphatase from Pseudomonas fluorescens (strain ATCC BAA-477 / NRRL B-23932 / Pf-5).